A 192-amino-acid chain; its full sequence is Fe/S biogenesis protein NfuA (192 aa).

The [4Fe-4S] cluster site is built by Cys149 and Cys152.

The protein belongs to the NfuA family. In terms of assembly, homodimer. It depends on [4Fe-4S] cluster as a cofactor.

In terms of biological role, involved in iron-sulfur cluster biogenesis. Binds a 4Fe-4S cluster, can transfer this cluster to apoproteins, and thereby intervenes in the maturation of Fe/S proteins. Could also act as a scaffold/chaperone for damaged Fe/S proteins. In Colwellia psychrerythraea (strain 34H / ATCC BAA-681) (Vibrio psychroerythus), this protein is Fe/S biogenesis protein NfuA.